A 317-amino-acid chain; its full sequence is R2-like ligand binding oxidase (317 aa).

Glu73, Glu106, and His109 together coordinate Mn(2+). Positions 76–167 (VTQDLQPFMA…ANQVRASVTY (92 aa)) form a cross-link, 3-(O4'-tyrosyl)-valine (Val-Tyr). Residue Glu106 coordinates Fe cation. Fe cation is bound by residues Glu172, Glu207, and His210.

This sequence belongs to the ribonucleoside diphosphate reductase small chain family. R2-like ligand binding oxidase subfamily. In terms of assembly, homodimer. Requires Fe cation as cofactor. Mn(2+) is required as a cofactor.

Functionally, probable oxidase. This chain is R2-like ligand binding oxidase, found in Saccharopolyspora erythraea (strain ATCC 11635 / DSM 40517 / JCM 4748 / NBRC 13426 / NCIMB 8594 / NRRL 2338).